Reading from the N-terminus, the 863-residue chain is Ubiquitin carboxyl-terminal hydrolase 13 (863 aa).

Phosphoserine; by AURKB is present on Ser-114. Thr-122 bears the Phosphothreonine mark. Residues 187–295 form a UBP-type; degenerate zinc finger; sequence PVSKYANNLT…KHLAHFGIDM (109 aa). Residues Cys-211, Cys-214, Cys-231, and His-244 each coordinate Zn(2+). Lys-311 participates in a covalent cross-link: Glycyl lysine isopeptide (Lys-Gly) (interchain with G-Cter in SUMO2). In terms of domain architecture, USP spans 336–861; the sequence is TGLKNLGNSC…LGYMYFYRRI (526 aa). The active-site Nucleophile is Cys-345. Residue Lys-405 forms a Glycyl lysine isopeptide (Lys-Gly) (interchain with G-Cter in SUMO2) linkage. UBA domains follow at residues 652-693 and 727-767; these read DIDE…IIVH and QPPE…IFSH. His-823 (proton acceptor) is an active-site residue.

Belongs to the peptidase C19 family. As to quaternary structure, interacts with UFD1. Interacts (via UBA domains) with SIAH2 (when ubiquitinated). Interacts with BAG6; the interaction is direct and may mediate UBL4A deubiquitination. Interacts (via UBA 2 domain) with AMFR; the interaction is direct. Interacts with UBL4A; may be indirect via BAG6. Interacts with NEDD4. Post-translationally, phosphorylated by AURKB at Ser-114; leading to stabilization of cell cycle proteins such as SKP2 and AURKB, but not MCL1. In terms of tissue distribution, highly expressed in ovary and testes.

It is found in the cytoplasm. It carries out the reaction Thiol-dependent hydrolysis of ester, thioester, amide, peptide and isopeptide bonds formed by the C-terminal Gly of ubiquitin (a 76-residue protein attached to proteins as an intracellular targeting signal).. With respect to regulation, specifically inhibited by spautin-1 (specific and potent autophagy inhibitor-1), a derivative of MBCQ that binds to USP13 and inhibits deubiquitinase activity. Regulated by PIK3C3/VPS34-containing complexes. The weak deubiquitinase activity in vitro suggests the existence of some mechanism that activates the enzyme. Its function is as follows. Deubiquitinase that mediates deubiquitination of target proteins such as BECN1, MITF, SKP2 and USP10 and is involved in various processes such as autophagy, endoplasmic reticulum-associated degradation (ERAD), cell cycle progression or DNA damage response. Component of a regulatory loop that controls autophagy and p53/TP53 levels: mediates deubiquitination of BECN1, a key regulator of autophagy, leading to stabilize the PIK3C3/VPS34-containing complexes. Alternatively, forms with NEDD4 a deubiquitination complex, which subsequently stabilizes VPS34 to promote autophagy. Also deubiquitinates USP10, an essential regulator of p53/TP53 stability. In turn, PIK3C3/VPS34-containing complexes regulate USP13 stability, suggesting the existence of a regulatory system by which PIK3C3/VPS34-containing complexes regulate p53/TP53 protein levels via USP10 and USP13. Recruited by nuclear UFD1 and mediates deubiquitination of SKP2, thereby regulating endoplasmic reticulum-associated degradation (ERAD). Also regulates ERAD through the deubiquitination of UBL4A a component of the BAG6/BAT3 complex. Mediates stabilization of SIAH2 independently of deubiquitinase activity: binds ubiquitinated SIAH2 and acts by impairing SIAH2 autoubiquitination. Regulates the cell cycle progression by stabilizing cell cycle proteins such as SKP2 and AURKB. In addition, plays an important role in maintaining genomic stability and in DNA replication checkpoint activation via regulation of RAP80 and TOPBP1. Deubiquitinates the multifunctional protein HMGB1 and subsequently drives its nucleocytoplasmic localization and its secretion. Positively regulates type I and type II interferon signalings by deubiquitinating STAT1 but negatively regulates antiviral response by deubiquitinating STING1. The protein is Ubiquitin carboxyl-terminal hydrolase 13 (USP13) of Homo sapiens (Human).